The primary structure comprises 288 residues: Diaminopimelate epimerase (288 aa).

Positions 14 and 67 each coordinate substrate. Cys76 acts as the Proton donor in catalysis. Substrate contacts are provided by residues Gly77–Asn78, Asn166, Asn199, and Glu217–Arg218. The Proton acceptor role is filled by Cys226. Gly227 to Thr228 is a substrate binding site.

The protein belongs to the diaminopimelate epimerase family. In terms of assembly, homodimer.

It is found in the cytoplasm. The catalysed reaction is (2S,6S)-2,6-diaminopimelate = meso-2,6-diaminopimelate. The protein operates within amino-acid biosynthesis; L-lysine biosynthesis via DAP pathway; DL-2,6-diaminopimelate from LL-2,6-diaminopimelate: step 1/1. Its function is as follows. Catalyzes the stereoinversion of LL-2,6-diaminopimelate (L,L-DAP) to meso-diaminopimelate (meso-DAP), a precursor of L-lysine and an essential component of the bacterial peptidoglycan. This Bacillus mycoides (strain KBAB4) (Bacillus weihenstephanensis) protein is Diaminopimelate epimerase.